We begin with the raw amino-acid sequence, 173 residues long: RxLR effector protein PITG_10232 (173 aa).

Residues 1–24 (MRLGYLIVGCAVALLATTDGVVDA) form the signal peptide. Positions 25–64 (SSKHKQLSTDVPRPADDISSERFLRSQDTPEDDGNPAHED) are disordered. The span at 37 to 49 (RPADDISSERFLR) shows a compositional bias: basic and acidic residues. The RxLR-dEER signature appears at 46–65 (RFLRSQDTPEDDGNPAHEDR).

The protein belongs to the RxLR effector family.

It localises to the secreted. The protein resides in the host nucleus. It is found in the host cytoplasm. Functionally, effector that leads to host programmed cell death. The sequence is that of RxLR effector protein PITG_10232 from Phytophthora infestans (strain T30-4) (Potato late blight agent).